The primary structure comprises 392 residues: Xylose operon regulatory protein (392 aa).

Residues 288–386 enclose the HTH araC/xylS-type domain; sequence IQAMHYIRNH…DTTPKEYRDV (99 aa). 2 consecutive DNA-binding regions (H-T-H motif) follow at residues 305–326 and 353–376; these read DQVL…KEEV and INEI…KKAY.

In terms of biological role, regulatory protein for the xylBAFGHR operon. In Escherichia coli O157:H7, this protein is Xylose operon regulatory protein (xylR).